A 323-amino-acid polypeptide reads, in one-letter code: uncharacterized protein (323 aa).

The protein resides in the mitochondrion. This is an uncharacterized protein from Schizosaccharomyces pombe (strain 972 / ATCC 24843) (Fission yeast).